The chain runs to 967 residues: Leucine-rich repeat-containing G-protein coupled receptor 6 (967 aa).

The first 24 residues, 1-24 (MPSPPGLRALWLCAALCASRRAGG), serve as a signal peptide directing secretion. Residues 25–567 (APQPGPGPTA…LFESWGIRLA (543 aa)) lie on the Extracellular side of the membrane. The LRRNT domain occupies 26 to 66 (PQPGPGPTACPAPCHCQEDGIMLSADCSELGLSAVPGDLDP). N-linked (GlcNAc...) asparagine glycosylation occurs at N77. 15 LRR repeats span residues 91–112 (FLEE…AFSG), 115–136 (SLKI…ALWE), 139–160 (SLQS…SFEG), 163–186 (SLRH…NNLP), 187–208 (ALQA…AFQN), 211–232 (SLVV…SFEG), 235–256 (NLET…IRTL), 258–279 (RLQE…AFMG), 282–303 (LLQT…AFQY), 306–328 (KLHT…KGTT), 329–350 (SLEI…MCQQ), 353–374 (RLRV…HRCQ), 375–396 (KLEE…TFSQ), 399–420 (SLQA…AFST), and 423–443 (SLVK…AGLG). N-linked (GlcNAc...) asparagine glycosylation occurs at N208. Residues 568–588 (VWAIVLLSVLCNGLVLLTVFA) form a helical membrane-spanning segment. Over 589-598 (GGPVPLPPVK) the chain is Cytoplasmic. Residues 599-619 (FVVGAIAGANTLTGISCGLLA) traverse the membrane as a helical segment. The Extracellular portion of the chain corresponds to 620-644 (SVDALTFGQFSEYGARWETGLGCRA). An intrachain disulfide couples C642 to C717. The chain crosses the membrane as a helical span at residues 645–665 (TGFLAVLGSEASVLLLTLAAV). Residues 666 to 687 (QCSVSVSCVRAYGKSPSLGSVR) are Cytoplasmic-facing. The helical transmembrane segment at 688-708 (AGVLGCLALAGLAAALPLASV) threads the bilayer. Residues 709–727 (GEYGASPLCLPYAPPEGQP) lie on the Extracellular side of the membrane. A helical membrane pass occupies residues 728 to 748 (AALGFTVALVMMNSFCFLVVA). Residues 749–774 (GAYIKLYCDLPRGDFEAVWDCAMVRH) lie on the Cytoplasmic side of the membrane. A helical membrane pass occupies residues 775–795 (VAWLIFADGLLYCPVAFLSFA). The Extracellular segment spans residues 796–809 (SMLGLFPVTPEAVK). A helical membrane pass occupies residues 810–830 (SVLLVVLPLPACLNPLLYLLF). Over 831–967 (NPHFRDDLRR…PSGLAFASHV (137 aa)) the chain is Cytoplasmic.

It belongs to the G-protein coupled receptor 1 family.

Its subcellular location is the cell membrane. Functionally, receptor for R-spondins that potentiates the canonical Wnt signaling pathway and acts as a marker of multipotent stem cells in the epidermis. Upon binding to R-spondins (RSPO1, RSPO2, RSPO3 or RSPO4), associates with phosphorylated LRP6 and frizzled receptors that are activated by extracellular Wnt receptors, triggering the canonical Wnt signaling pathway to increase expression of target genes. In contrast to classical G-protein coupled receptors, does not activate heterotrimeric G-proteins to transduce the signal. May act as a tumor suppressor. This is Leucine-rich repeat-containing G-protein coupled receptor 6 (LGR6) from Homo sapiens (Human).